A 312-amino-acid polypeptide reads, in one-letter code: NAD(P)(+)--arginine ADP-ribosyltransferase 2 (312 aa).

The signal sequence occupies residues 1-20; it reads MELLALRWVLLAGTLLSTSA. Residues 21 to 31 constitute a propeptide that is removed on maturation; the sequence is ASSALQEGDLG. 2 disulfide bridges follow: C51–C260 and C159–C208. Residues 71 to 256 form the TR mART core domain; it reads YAYAVGWRKA…IYLRSKGKMS (186 aa). NAD(+) contacts are provided by Y108, R164, and Q183. The active site involves R164. S186 is an active-site residue. Residue S217 participates in NAD(+) binding. Residue E224 is part of the active site. Residues 267–312 constitute a propeptide that is removed on maturation; sequence GGQWGRGHQEVGLGLSPGLALPVLPCSNCSCWGSGHRAGDPIPAAV.

It belongs to the Arg-specific ADP-ribosyltransferase family.

The protein localises to the secreted. Its subcellular location is the extracellular space. It carries out the reaction L-arginyl-[protein] + NAD(+) = N(omega)-(ADP-D-ribosyl)-L-arginyl-[protein] + nicotinamide + H(+). The polypeptide is NAD(P)(+)--arginine ADP-ribosyltransferase 2 (Gallus gallus (Chicken)).